The chain runs to 210 residues: Protein DrgA (210 aa).

It belongs to the nitroreductase family. It depends on FMN as a cofactor.

In terms of biological role, controls resistance to the herbicide Dinoseb and metronidazole. Involved in detoxification of Dinoseb via the reduction of the nitro group(s) and this process is accompanied by the formation of toxic superoxide anions. The sequence is that of Protein DrgA (drgA) from Synechocystis sp. (strain ATCC 27184 / PCC 6803 / Kazusa).